Here is a 128-residue protein sequence, read N- to C-terminus: Protein BEX1 (128 aa).

The disordered stretch occupies residues 1–37 (MESKEKRAVNNLSMENTNQENEEKEEKEQVANKGEPL). A Phosphoserine modification is found at Ser-105. Residues 107-128 (SLRAVSTDPPHHDHHDEFCLMP) are disordered. Positions 115-128 (PPHHDHHDEFCLMP) are enriched in basic and acidic residues. The his cluster stretch occupies residues 117-121 (HHDHH). Cys-125 serves as a coordination point for Zn(2+).

The protein belongs to the BEX family. Interacts with neurotrophin receptor p75NTR/NGFR. Interacts with OMP. Post-translationally, phosphorylated. Phosphorylation of Ser-105 protects it from the proteasome. In terms of processing, ubiquitinated. Degraded by the proteasome.

The protein localises to the nucleus. It localises to the cytoplasm. Its function is as follows. Signaling adapter molecule involved in p75NTR/NGFR signaling. Plays a role in cell cycle progression and neuronal differentiation. Inhibits neuronal differentiation in response to nerve growth factor (NGF). May act as a link between the cell cycle and neurotrophic factor signaling, possibly by functioning as an upstream modulator of receptor signaling, coordinating biological responses to external signals with internal cellular states. In absence of reductive stress, acts as a pseudosubstrate for the CRL2(FEM1B) complex: associates with FEM1B via zinc, thereby preventing association between FEM1B and its substrates. The polypeptide is Protein BEX1 (BEX1) (Macaca fascicularis (Crab-eating macaque)).